We begin with the raw amino-acid sequence, 346 residues long: uncharacterized protein (346 aa).

The disordered stretch occupies residues 10–109 (WDFIMTDPSS…SNSNGNNSPV (100 aa)). A compositionally biased stretch (low complexity) spans 26–44 (KGSSKNGSPKTSSPKSGSP). Positions 56-67 (NQQLLQNDSINL) are enriched in polar residues. Over residues 94–109 (KSSVVPSNSNGNNSPV) the composition is skewed to low complexity.

This is an uncharacterized protein from Dictyostelium discoideum (Social amoeba).